The sequence spans 525 residues: GMP synthase [glutamine-hydrolyzing] (525 aa).

The Glutamine amidotransferase type-1 domain maps to 9 to 207; the sequence is RILILDFGSQ…VLGICGCEAL (199 aa). Cys-86 serves as the catalytic Nucleophile. Catalysis depends on residues His-181 and Glu-183. The region spanning 208-400 is the GMPS ATP-PPase domain; it reads WTSATIIEDA…LGLPYDMLYR (193 aa). Position 235–241 (235–241) interacts with ATP; the sequence is SGGVDSS.

In terms of assembly, homodimer.

The enzyme catalyses XMP + L-glutamine + ATP + H2O = GMP + L-glutamate + AMP + diphosphate + 2 H(+). The protein operates within purine metabolism; GMP biosynthesis; GMP from XMP (L-Gln route): step 1/1. In terms of biological role, catalyzes the synthesis of GMP from XMP. This Yersinia pseudotuberculosis serotype IB (strain PB1/+) protein is GMP synthase [glutamine-hydrolyzing].